Reading from the N-terminus, the 394-residue chain is p-hydroxybenzoate hydroxylase (394 aa).

FAD is bound by residues Ser13, Glu32, 42–47 (RIRAGV), and Gln102. Substrate-binding positions include Tyr201, 212-214 (SQR), and Tyr222. Asp286 provides a ligand contact to FAD. Pro293 is a substrate binding site. 299–300 (LN) provides a ligand contact to FAD.

Belongs to the aromatic-ring hydroxylase family. As to quaternary structure, homodimer. It depends on FAD as a cofactor.

The catalysed reaction is 4-hydroxybenzoate + NADPH + O2 + H(+) = 3,4-dihydroxybenzoate + NADP(+) + H2O. It functions in the pathway aromatic compound metabolism; benzoate degradation via hydroxylation; 3,4-dihydroxybenzoate from benzoate: step 2/2. Its function is as follows. Catalyzes the incorporation of an atom of dioxygen into p-hydroxybenzoate (p-OHB) to form 3,4-dihydroxybenzoate (3,4DOHB). The reaction occurs in two parts: reduction of the flavin adenine dinucleotide (FAD) in the enzyme by reduced nicotinamide adenine dinucleotide phosphate (NADPH) in response to binding p-hydroxybenzoate to the enzyme and oxidation of reduced FAD with oxygen to form a hydroperoxide, which then oxygenates p-hydroxybenzoate. This Pseudomonas fluorescens protein is p-hydroxybenzoate hydroxylase (pobA).